The primary structure comprises 95 residues: Integration host factor subunit beta (95 aa).

The segment at 56–76 (RAPRTGRNPKTGSSVDLEGKY) is disordered.

The protein belongs to the bacterial histone-like protein family. In terms of assembly, heterodimer of an alpha and a beta chain.

Functionally, this protein is one of the two subunits of integration host factor, a specific DNA-binding protein that functions in genetic recombination as well as in transcriptional and translational control. This is Integration host factor subunit beta from Shewanella baltica (strain OS223).